Reading from the N-terminus, the 71-residue chain is Small ribosomal subunit protein bS21 (71 aa).

Belongs to the bacterial ribosomal protein bS21 family.

The polypeptide is Small ribosomal subunit protein bS21 (Psychromonas ingrahamii (strain DSM 17664 / CCUG 51855 / 37)).